The sequence spans 436 residues: UPF0597 protein YhaM (436 aa).

Belongs to the UPF0597 family.

The sequence is that of UPF0597 protein YhaM from Escherichia coli O139:H28 (strain E24377A / ETEC).